Consider the following 167-residue polypeptide: SsrA-binding protein (167 aa).

The tract at residues 137–167 is disordered; sequence GKQSHDKRDAAKERDWQRDKQRVMRRHNRDA. The segment covering 139–158 has biased composition (basic and acidic residues); sequence QSHDKRDAAKERDWQRDKQR.

Belongs to the SmpB family.

Its subcellular location is the cytoplasm. Its function is as follows. Required for rescue of stalled ribosomes mediated by trans-translation. Binds to transfer-messenger RNA (tmRNA), required for stable association of tmRNA with ribosomes. tmRNA and SmpB together mimic tRNA shape, replacing the anticodon stem-loop with SmpB. tmRNA is encoded by the ssrA gene; the 2 termini fold to resemble tRNA(Ala) and it encodes a 'tag peptide', a short internal open reading frame. During trans-translation Ala-aminoacylated tmRNA acts like a tRNA, entering the A-site of stalled ribosomes, displacing the stalled mRNA. The ribosome then switches to translate the ORF on the tmRNA; the nascent peptide is terminated with the 'tag peptide' encoded by the tmRNA and targeted for degradation. The ribosome is freed to recommence translation, which seems to be the essential function of trans-translation. The polypeptide is SsrA-binding protein (Xanthomonas campestris pv. campestris (strain 8004)).